The primary structure comprises 167 residues: Cytochrome c-type biogenesis protein CcmE (167 aa).

Over 1-7 (MTRKQRR) the chain is Cytoplasmic. Residues 8–28 (LLMIGGAGVVLIVAVGLVLNA) form a helical; Signal-anchor for type II membrane protein membrane-spanning segment. Residues 29-167 (LRDSIVFFST…TSANAAEGGK (139 aa)) are Periplasmic-facing. Residues histidine 122 and tyrosine 126 each contribute to the heme site. A compositionally biased stretch (basic and acidic residues) spans 137–150 (KDGHWKDDYGKKSP). The disordered stretch occupies residues 137–167 (KDGHWKDDYGKKSPGETTAGQTSANAAEGGK). A compositionally biased stretch (polar residues) spans 151–161 (GETTAGQTSAN).

The protein belongs to the CcmE/CycJ family.

It is found in the cell inner membrane. In terms of biological role, heme chaperone required for the biogenesis of c-type cytochromes. Transiently binds heme delivered by CcmC and transfers the heme to apo-cytochromes in a process facilitated by CcmF and CcmH. In Rhodopseudomonas palustris (strain ATCC BAA-98 / CGA009), this protein is Cytochrome c-type biogenesis protein CcmE.